We begin with the raw amino-acid sequence, 140 residues long: Lysozyme D (140 aa).

The N-terminal stretch at 1–18 is a signal peptide; that stretch reads MKAFIVLVALACAAPAFG. Residues 19 to 140 enclose the C-type lysozyme domain; sequence RTMDRCSLAR…GWLPSIDDCF (122 aa). Cystine bridges form between Cys-24-Cys-139, Cys-45-Cys-129, Cys-80-Cys-96, and Cys-92-Cys-110. Active-site residues include Glu-50 and Asp-68.

This sequence belongs to the glycosyl hydrolase 22 family. Found in the midgut.

It catalyses the reaction Hydrolysis of (1-&gt;4)-beta-linkages between N-acetylmuramic acid and N-acetyl-D-glucosamine residues in a peptidoglycan and between N-acetyl-D-glucosamine residues in chitodextrins.. Functionally, unlikely to play an active role in the humoral immune defense. May have a function in the digestion of bacteria in the food. The protein is Lysozyme D (LysD) of Drosophila melanogaster (Fruit fly).